A 209-amino-acid polypeptide reads, in one-letter code: Glycerol-3-phosphate acyltransferase (209 aa).

5 consecutive transmembrane segments (helical) span residues 7-27, 85-105, 117-137, 142-162, and 166-183; these read IELAGIAGAYFLGSLSSAIIV, AIILVGFASFIGHLYPIFFGF, VMFGLSLPIGAAVAGTWLFVA, ISSLSALIATALAPLYIYLLA, and MAWVSVTAIMTLILFWRH.

The protein belongs to the PlsY family. Probably interacts with PlsX.

Its subcellular location is the cell inner membrane. The catalysed reaction is an acyl phosphate + sn-glycerol 3-phosphate = a 1-acyl-sn-glycero-3-phosphate + phosphate. It functions in the pathway lipid metabolism; phospholipid metabolism. Catalyzes the transfer of an acyl group from acyl-phosphate (acyl-PO(4)) to glycerol-3-phosphate (G3P) to form lysophosphatidic acid (LPA). This enzyme utilizes acyl-phosphate as fatty acyl donor, but not acyl-CoA or acyl-ACP. This Hydrogenovibrio crunogenus (strain DSM 25203 / XCL-2) (Thiomicrospira crunogena) protein is Glycerol-3-phosphate acyltransferase.